A 430-amino-acid chain; its full sequence is Mannosylglucosylglycerate synthase (430 aa).

The protein belongs to the glycosyltransferase group 1 family. A divalent metal cation is required as a cofactor.

The catalysed reaction is (2R)-2-O-(alpha-D-glucopyranosyl)-glycerate + GDP-alpha-D-mannose = (2R)-2-O-[alpha-D-mannopyranosyl-(1-&gt;2)-alpha-D-glucopyranosyl]-glycerate + GDP + H(+). Functionally, involved in the biosynthesis of the compatible solute mannosylglucosylglycerate through a nonphosphorylating pathway. Catalyzes the synthesis of mannosylglucosylglycerate (MGG) from glucosylglycerate (GG) and GDP-mannose. In Petrotoga mobilis (strain DSM 10674 / SJ95), this protein is Mannosylglucosylglycerate synthase.